Reading from the N-terminus, the 1087-residue chain is Band 4.1-like protein 3 (1087 aa).

Met1 bears the N-acetylmethionine mark. The tract at residues Met1 to Gln43 is disordered. The residue at position 2 (Thr2) is an N-acetylthreonine; in Band 4.1-like protein 3, N-terminally processed. Over residues Gln20 to Pro32 the composition is skewed to low complexity. Position 88 is a phosphoserine (Ser88). Residues Met110–Leu391 form the FERM domain. The segment at Ala394–Leu513 is hydrophilic. Ser420, Ser443, and Ser460 each carry phosphoserine. Polar residues predominate over residues Ile459–Thr469. Disordered regions lie at residues Ile459 to Arg529, Gly541 to Arg563, Ser675 to Glu715, and Ser937 to Gly965. A phosphothreonine mark is found at Thr469 and Thr492. Residues Ser514 to Glu860 are spectrin--actin-binding. Residues Pro516–Thr526 are compositionally biased toward polar residues. Acidic residues predominate over residues Asp681 to Asp691. Positions Ala698–Glu707 are enriched in low complexity. Thr706 is modified (phosphothreonine). Phosphoserine is present on residues Ser708, Ser960, and Ser962. The C-terminal (CTD) stretch occupies residues Arg861 to Glu1083. Positions Glu947–Ser960 are enriched in polar residues. Thr1081 is modified (phosphothreonine).

As to quaternary structure, interacts (via FERM domain) with CADM1. Interacts (via FERM domain) with PRMT3; the interaction is direct and inhibits the protein-arginine N-methyltransferase activity of PRMT3. Interacts with PRMT5. Interacts with PRMT6. As to expression, expressed at high levels in brain, with lower levels in kidney, intestine, and testis. Detected in lung.

Its subcellular location is the cytoplasm. It is found in the cytoskeleton. The protein resides in the cell junction. The protein localises to the cell membrane. Tumor suppressor that inhibits cell proliferation and promotes apoptosis. Modulates the activity of protein arginine N-methyltransferases, including PRMT3 and PRMT5. The protein is Band 4.1-like protein 3 of Homo sapiens (Human).